A 197-amino-acid polypeptide reads, in one-letter code: Large ribosomal subunit protein bL25 (197 aa).

It belongs to the bacterial ribosomal protein bL25 family. CTC subfamily. Part of the 50S ribosomal subunit; part of the 5S rRNA/L5/L18/L25 subcomplex. Contacts the 5S rRNA. Binds to the 5S rRNA independently of L5 and L18.

This is one of the proteins that binds to the 5S RNA in the ribosome where it forms part of the central protuberance. This Pseudomonas putida (strain GB-1) protein is Large ribosomal subunit protein bL25.